Consider the following 311-residue polypeptide: Malate dehydrogenase (311 aa).

NAD(+) is bound by residues 7–13 and aspartate 34; that span reads GAAGGIG. Substrate is bound by residues arginine 81 and arginine 87. NAD(+) contacts are provided by residues asparagine 94 and 117–119; that span reads ITN. Asparagine 119 and arginine 153 together coordinate substrate. The active-site Proton acceptor is histidine 177. Residue methionine 227 coordinates NAD(+).

It belongs to the LDH/MDH superfamily. MDH type 1 family. In terms of assembly, homodimer.

It carries out the reaction (S)-malate + NAD(+) = oxaloacetate + NADH + H(+). Functionally, catalyzes the reversible oxidation of malate to oxaloacetate. In Shewanella baltica (strain OS223), this protein is Malate dehydrogenase.